Consider the following 189-residue polypeptide: Blue copper protein (189 aa).

A signal peptide spans 1–24; it reads MAFSNALVLCFLLAIINMALPSLA. The Phytocyanin domain maps to 25 to 124; that stretch reads TVYTVGDTSG…GMKLSIKVKA (100 aa). Cu cation contacts are provided by histidine 65, cysteine 106, and histidine 111. Cysteine 78 and cysteine 106 are joined by a disulfide. Residues 127–160 are compositionally biased toward low complexity; it reads GSSAAPSATPSSSGKGSPSSDDTPAATTTTTTPT. The disordered stretch occupies residues 127–165; the sequence is GSSAAPSATPSSSGKGSPSSDDTPAATTTTTTPTKQNES. Residue asparagine 163 is glycosylated (N-linked (GlcNAc...) asparagine).

The protein is Blue copper protein of Pisum sativum (Garden pea).